Here is a 317-residue protein sequence, read N- to C-terminus: Universal stress protein MT2052 (317 aa).

ATP-binding positions include glycine 13, 128-134, 142-143, glycine 175, aspartate 208, 277-283, and 291-293; these read GYRGQGA, SV, GSHGRGG, and SVS.

Belongs to the universal stress protein A family.

The chain is Universal stress protein MT2052 from Mycobacterium tuberculosis (strain CDC 1551 / Oshkosh).